Consider the following 362-residue polypeptide: Putative glutamate--cysteine ligase 2-1 (362 aa).

It belongs to the glutamate--cysteine ligase type 2 family. YbdK subfamily.

It carries out the reaction L-cysteine + L-glutamate + ATP = gamma-L-glutamyl-L-cysteine + ADP + phosphate + H(+). ATP-dependent carboxylate-amine ligase which exhibits weak glutamate--cysteine ligase activity. The chain is Putative glutamate--cysteine ligase 2-1 from Streptomyces avermitilis (strain ATCC 31267 / DSM 46492 / JCM 5070 / NBRC 14893 / NCIMB 12804 / NRRL 8165 / MA-4680).